We begin with the raw amino-acid sequence, 197 residues long: Protocatechuate 3,4-dioxygenase alpha chain (197 aa).

Arg-130 serves as a coordination point for 3,4-dihydroxybenzoate.

Belongs to the intradiol ring-cleavage dioxygenase family. In terms of assembly, the enzyme is an oligomer of 12 copies of the alpha and beta chains. Requires Fe(3+) as cofactor.

The catalysed reaction is 3,4-dihydroxybenzoate + O2 = 3-carboxy-cis,cis-muconate + 2 H(+). It participates in aromatic compound metabolism; beta-ketoadipate pathway; 3-carboxy-cis,cis-muconate from 3,4-dihydroxybenzoate: step 1/1. In terms of biological role, plays an essential role in the utilization of numerous aromatic and hydroaromatic compounds via the beta-ketoadipate pathway. The protein is Protocatechuate 3,4-dioxygenase alpha chain (pcaG) of Burkholderia cepacia (Pseudomonas cepacia).